A 269-amino-acid chain; its full sequence is 3-methyl-2-oxobutanoate hydroxymethyltransferase (269 aa).

Residues Asp-50 and Asp-89 each contribute to the Mg(2+) site. 3-methyl-2-oxobutanoate contacts are provided by residues 50–51 (DS), Asp-89, and Lys-118. Position 120 (Glu-120) interacts with Mg(2+). Glu-187 functions as the Proton acceptor in the catalytic mechanism.

The protein belongs to the PanB family. As to quaternary structure, homodecamer; pentamer of dimers. It depends on Mg(2+) as a cofactor.

It localises to the cytoplasm. The enzyme catalyses 3-methyl-2-oxobutanoate + (6R)-5,10-methylene-5,6,7,8-tetrahydrofolate + H2O = 2-dehydropantoate + (6S)-5,6,7,8-tetrahydrofolate. The protein operates within cofactor biosynthesis; (R)-pantothenate biosynthesis; (R)-pantoate from 3-methyl-2-oxobutanoate: step 1/2. In terms of biological role, catalyzes the reversible reaction in which hydroxymethyl group from 5,10-methylenetetrahydrofolate is transferred onto alpha-ketoisovalerate to form ketopantoate. This is 3-methyl-2-oxobutanoate hydroxymethyltransferase from Nitrosomonas eutropha (strain DSM 101675 / C91 / Nm57).